A 203-amino-acid chain; its full sequence is Probable GTP-binding protein EngB (203 aa).

Residues 1 to 190 (MPEIVLVGRS…LEALQERVRK (190 aa)) form the EngB-type G domain. GTP-binding positions include 8–15 (GRSNVGKS), 35–39 (GVTRK), 53–56 (DMPG), 132–135 (NKID), and 169–171 (ISA). Mg(2+) contacts are provided by S15 and T37.

Belongs to the TRAFAC class TrmE-Era-EngA-EngB-Septin-like GTPase superfamily. EngB GTPase family. It depends on Mg(2+) as a cofactor.

In terms of biological role, necessary for normal cell division and for the maintenance of normal septation. This Methanopyrus kandleri (strain AV19 / DSM 6324 / JCM 9639 / NBRC 100938) protein is Probable GTP-binding protein EngB.